The primary structure comprises 1379 residues: DNA-directed RNA polymerase subunit beta'' (1379 aa).

Residues Cys220, Cys293, Cys300, and Cys303 each coordinate Zn(2+).

It belongs to the RNA polymerase beta' chain family. RpoC2 subfamily. In plastids the minimal PEP RNA polymerase catalytic core is composed of four subunits: alpha, beta, beta', and beta''. When a (nuclear-encoded) sigma factor is associated with the core the holoenzyme is formed, which can initiate transcription. The cofactor is Zn(2+).

The protein localises to the plastid. The protein resides in the chloroplast. The enzyme catalyses RNA(n) + a ribonucleoside 5'-triphosphate = RNA(n+1) + diphosphate. DNA-dependent RNA polymerase catalyzes the transcription of DNA into RNA using the four ribonucleoside triphosphates as substrates. This is DNA-directed RNA polymerase subunit beta'' from Crucihimalaya wallichii (Rock-cress).